Reading from the N-terminus, the 159-residue chain is Large ribosomal subunit protein uL11 (159 aa).

It belongs to the universal ribosomal protein uL11 family. As to quaternary structure, part of the ribosomal stalk of the 50S ribosomal subunit. Interacts with L10 and the large rRNA to form the base of the stalk. L10 forms an elongated spine to which L12 dimers bind in a sequential fashion forming a multimeric L10(L12)X complex.

Functionally, forms part of the ribosomal stalk which helps the ribosome interact with GTP-bound translation factors. The sequence is that of Large ribosomal subunit protein uL11 from Methanococcus vannielii (strain ATCC 35089 / DSM 1224 / JCM 13029 / OCM 148 / SB).